The sequence spans 206 residues: Cytochrome b-245 chaperone 1 homolog (206 aa).

The helical transmembrane segment at G21–S43 threads the bilayer. Residues A172–H206 are disordered. Composition is skewed to acidic residues over residues D174–E184 and D193–H206.

Belongs to the CYBC1 family.

The protein resides in the endoplasmic reticulum membrane. Functions as a chaperone necessary for a stable expression of the CYBA and CYBB subunits of the cytochrome b-245 heterodimer. The protein is Cytochrome b-245 chaperone 1 homolog of Danio rerio (Zebrafish).